We begin with the raw amino-acid sequence, 344 residues long: Holliday junction branch migration complex subunit RuvB (344 aa).

A large ATPase domain (RuvB-L) region spans residues 1–182; it reads MRIELLNTPV…FGISNRFDYY (182 aa). Residues isoleucine 21, arginine 22, glycine 63, lysine 66, threonine 67, threonine 68, 129 to 131, arginine 172, tyrosine 182, and arginine 219 contribute to the ATP site; that span reads EDF. Residue threonine 67 participates in Mg(2+) binding. Residues 183-253 form a small ATPAse domain (RuvB-S) region; the sequence is PPELLETILM…TAMKTLDSLE (71 aa). A head domain (RuvB-H) region spans residues 256–344; sequence EEGLDEMDKK…GTLFDGQEHV (89 aa). DNA is bound by residues arginine 311 and arginine 316.

Belongs to the RuvB family. Homohexamer. Forms an RuvA(8)-RuvB(12)-Holliday junction (HJ) complex. HJ DNA is sandwiched between 2 RuvA tetramers; dsDNA enters through RuvA and exits via RuvB. An RuvB hexamer assembles on each DNA strand where it exits the tetramer. Each RuvB hexamer is contacted by two RuvA subunits (via domain III) on 2 adjacent RuvB subunits; this complex drives branch migration. In the full resolvosome a probable DNA-RuvA(4)-RuvB(12)-RuvC(2) complex forms which resolves the HJ.

The protein localises to the cytoplasm. It catalyses the reaction ATP + H2O = ADP + phosphate + H(+). Its function is as follows. The RuvA-RuvB-RuvC complex processes Holliday junction (HJ) DNA during genetic recombination and DNA repair, while the RuvA-RuvB complex plays an important role in the rescue of blocked DNA replication forks via replication fork reversal (RFR). RuvA specifically binds to HJ cruciform DNA, conferring on it an open structure. The RuvB hexamer acts as an ATP-dependent pump, pulling dsDNA into and through the RuvAB complex. RuvB forms 2 homohexamers on either side of HJ DNA bound by 1 or 2 RuvA tetramers; 4 subunits per hexamer contact DNA at a time. Coordinated motions by a converter formed by DNA-disengaged RuvB subunits stimulates ATP hydrolysis and nucleotide exchange. Immobilization of the converter enables RuvB to convert the ATP-contained energy into a lever motion, pulling 2 nucleotides of DNA out of the RuvA tetramer per ATP hydrolyzed, thus driving DNA branch migration. The RuvB motors rotate together with the DNA substrate, which together with the progressing nucleotide cycle form the mechanistic basis for DNA recombination by continuous HJ branch migration. Branch migration allows RuvC to scan DNA until it finds its consensus sequence, where it cleaves and resolves cruciform DNA. In Chlorobium luteolum (strain DSM 273 / BCRC 81028 / 2530) (Pelodictyon luteolum), this protein is Holliday junction branch migration complex subunit RuvB.